We begin with the raw amino-acid sequence, 342 residues long: S-adenosylmethionine:tRNA ribosyltransferase-isomerase (342 aa).

It belongs to the QueA family. As to quaternary structure, monomer.

It is found in the cytoplasm. The enzyme catalyses 7-aminomethyl-7-carbaguanosine(34) in tRNA + S-adenosyl-L-methionine = epoxyqueuosine(34) in tRNA + adenine + L-methionine + 2 H(+). Its pathway is tRNA modification; tRNA-queuosine biosynthesis. Transfers and isomerizes the ribose moiety from AdoMet to the 7-aminomethyl group of 7-deazaguanine (preQ1-tRNA) to give epoxyqueuosine (oQ-tRNA). The polypeptide is S-adenosylmethionine:tRNA ribosyltransferase-isomerase (Campylobacter jejuni subsp. jejuni serotype O:23/36 (strain 81-176)).